A 110-amino-acid polypeptide reads, in one-letter code: Large ribosomal subunit protein uL24 (110 aa).

This sequence belongs to the universal ribosomal protein uL24 family. In terms of assembly, part of the 50S ribosomal subunit.

Functionally, one of two assembly initiator proteins, it binds directly to the 5'-end of the 23S rRNA, where it nucleates assembly of the 50S subunit. One of the proteins that surrounds the polypeptide exit tunnel on the outside of the subunit. This Thermus thermophilus (strain ATCC BAA-163 / DSM 7039 / HB27) protein is Large ribosomal subunit protein uL24.